Here is a 400-residue protein sequence, read N- to C-terminus: Acetate kinase (400 aa).

Asn-10 serves as a coordination point for Mg(2+). Lys-17 contributes to the ATP binding site. Arg-91 is a binding site for substrate. Asp-150 serves as the catalytic Proton donor/acceptor. Residues 210 to 214 (HLGNG), 285 to 287 (DCR), and 333 to 337 (GIGEN) contribute to the ATP site. Glu-387 is a binding site for Mg(2+).

The protein belongs to the acetokinase family. As to quaternary structure, homodimer. The cofactor is Mg(2+). Mn(2+) is required as a cofactor.

It is found in the cytoplasm. It carries out the reaction acetate + ATP = acetyl phosphate + ADP. The protein operates within metabolic intermediate biosynthesis; acetyl-CoA biosynthesis; acetyl-CoA from acetate: step 1/2. Its function is as follows. Catalyzes the formation of acetyl phosphate from acetate and ATP. Can also catalyze the reverse reaction. This Erwinia tasmaniensis (strain DSM 17950 / CFBP 7177 / CIP 109463 / NCPPB 4357 / Et1/99) protein is Acetate kinase.